Consider the following 464-residue polypeptide: L-cystine uptake protein TcyP (464 aa).

The next 10 helical transmembrane spans lie at 3–23 (TLLV…LYYM), 34–54 (VFTA…IYEP), 73–93 (YVKL…ISAF), 107–127 (GLII…GIAA), 184–204 (PTST…FIGV), 225–245 (IVMR…LALM), 263–283 (FVLA…LLIA), 347–367 (AGIY…IDPL), 371–391 (FILT…GVGG), and 395–415 (FAAL…ALVI).

This sequence belongs to the dicarboxylate/amino acid:cation symporter (DAACS) (TC 2.A.23) family.

It is found in the membrane. Mediates uptake of L-cystine, the oxidized form of L-cysteine. This chain is L-cystine uptake protein TcyP, found in Bacillus thuringiensis (strain Al Hakam).